The chain runs to 1209 residues: Calcium-activated potassium channel subunit alpha-1 (1209 aa).

The segment covering 1–26 has biased composition (gly residues); it reads MANGGGGGGGGSSGSSGGGGGGGGGE. 2 disordered regions span residues 1-29 and 42-64; these read MANG…ETAL and LDAS…SVHE. Over 1 to 87 the chain is Extracellular; it reads MANGGGGGGG…VPCDSRGQRM (87 aa). A compositionally biased stretch (low complexity) spans 45-61; it reads SSSSSSSSSSSSSSSSS. The helical transmembrane segment at 88-108 threads the bilayer; it reads WWAFLASSMVTFFGGLFIILL. The Cytoplasmic segment spans residues 109-179; that stretch reads WRTLKYLWTV…MISAQTLTGR (71 aa). 3 S-palmitoyl cysteine lipidation sites follow: C119, C120, and C122. A helical membrane pass occupies residues 180–200; that stretch reads VLVVLVFALSIGALVIYFIDS. Residues 201-215 lie on the Extracellular side of the membrane; the sequence is SNPIESCQNFYKDFT. Residues 216–236 traverse the membrane as a helical segment; the sequence is LQIDMAFNVFFLLYFGLRFIA. Residues 237-240 lie on the Cytoplasmic side of the membrane; that stretch reads ANDK. A helical membrane pass occupies residues 241-261; it reads LWFWLEVNSVVDFFTVPPVFV. Residues 262–265 lie on the Extracellular side of the membrane; sequence SVYL. Residues 266–286 form a helical; Voltage-sensor membrane-spanning segment; sequence NRSWLGLRFLRALRLIQFSEI. Residues 287–301 lie on the Cytoplasmic side of the membrane; sequence LQFLNILKTSNSIKL. Residues 302 to 322 traverse the membrane as a helical segment; that stretch reads VNLLSIFISTWLTAAGFIHLV. Over 323-336 the chain is Extracellular; the sequence is ENSGDPWENFQNNQ. Residues 337 to 359 constitute an intramembrane region (pore-forming); the sequence is ALTYWECVYLLMVTMSTVGYGDV. The Selectivity for potassium motif lies at 353–356; the sequence is TVGY. Residues 360 to 368 are Extracellular-facing; the sequence is YAKTTLGRL. A helical transmembrane segment spans residues 369 to 389; sequence FMVFFILGGLAMFASYVPEII. Over 390–1209 the chain is Cytoplasmic; sequence ELIGNRKKYG…DKQKKEMVYR (820 aa). The 143-residue stretch at 408 to 550 folds into the RCK N-terminal 1 domain; the sequence is RKHIVVCGHI…WNWKEGDDAI (143 aa). Positions 440, 463, and 465 each coordinate Mg(2+). The segment at 557–577 is segment S7; it reads LGFIAQSCLAQGLSTMLANLF. The segment S8 stretch occupies residues 614–634; that stretch reads LSFPTVCELCFVKLKLLMIAI. Residues 682 to 686 are heme-binding motif; it reads CKACH. Residues 704–734 form a disordered region; it reads EDEQPPTLSPKKKQRNGGMRNSPNTSPKLMR. T710 is modified (phosphothreonine). S712, S725, and S729 each carry phosphoserine. A segment S9 region spans residues 784-804; the sequence is VLSGHVVVCIFGDVSSALIGL. Residues 786 to 930 form the RCK N-terminal 2 domain; the sequence is SGHVVVCIFG…MDRSSPDNSP (145 aa). Position 917 is a phosphothreonine (T917). Phosphoserine is present on residues S925 and S929. Residues 977-999 carry the Calcium bowl motif; sequence TELVNDTNVQFLDQDDDDDPDTE. Ca(2+) contacts are provided by Q986, D989, D992, and D994. Positions 1006-1026 are segment S10; that stretch reads FACGTAFAVSVLDSLMSATYF. Residues 1160–1185 show a composition bias toward low complexity; it reads RASLSHSSHSSQSSSKKSSSVHSIPS. The tract at residues 1160 to 1209 is disordered; that stretch reads RASLSHSSHSSQSSSKKSSSVHSIPSTANRPNRPKSRESRDKQKKEMVYR. A compositionally biased stretch (basic and acidic residues) spans 1194 to 1209; that stretch reads KSRESRDKQKKEMVYR. S1195 and S1198 each carry phosphoserine.

It belongs to the potassium channel family. Calcium-activated (TC 1.A.1.3) subfamily. KCa1.1/KCNMA1 sub-subfamily. Homotetramer; which constitutes the calcium-activated potassium channel. Interacts with beta subunits KCNMB1, KCNMB2, KCNMB3 and KCNMB4. Interacts with gamma subunits LRRC26, LRRC38, LRRC52 and LRRC55. Beta and gamma subunits are accessory, and modulate its activity. Interacts with RAB11B. Post-translationally, phosphorylated. Phosphorylation by kinases such as PKA and/or PKG. In smooth muscles, phosphorylation affects its activity. In terms of processing, palmitoylation by ZDHHC22 and ZDHHC23 within the intracellular linker between the S0 and S1 transmembrane domains regulates localization to the plasma membrane. Depalmitoylated by LYPLA1 and LYPLAL1, leading to retard exit from the trans-Golgi network.

The protein resides in the cell membrane. Its subcellular location is the endoplasmic reticulum membrane. The catalysed reaction is K(+)(in) = K(+)(out). Its activity is regulated as follows. Ethanol and carbon monoxide-bound heme increase channel activation. With respect to regulation, heme inhibits channel activation. In terms of biological role, potassium channel activated by both membrane depolarization or increase in cytosolic Ca(2+) that mediates export of K(+). It is also activated by the concentration of cytosolic Mg(2+). Its activation dampens the excitatory events that elevate the cytosolic Ca(2+) concentration and/or depolarize the cell membrane. It therefore contributes to repolarization of the membrane potential. Plays a key role in controlling excitability in a number of systems, such as regulation of the contraction of smooth muscle, the tuning of hair cells in the cochlea, regulation of transmitter release, and innate immunity. In smooth muscles, its activation by high level of Ca(2+), caused by ryanodine receptors in the sarcoplasmic reticulum, regulates the membrane potential. In cochlea cells, its number and kinetic properties partly determine the characteristic frequency of each hair cell and thereby helps to establish a tonotopic map. Kinetics of KCNMA1 channels are determined by alternative splicing, phosphorylation status and its combination with modulating beta subunits. Highly sensitive to both iberiotoxin (IbTx) and charybdotoxin (CTX). Functionally, potassium channel activated by both membrane depolarization or increase in cytosolic Ca(2+) that mediates export of K(+). The sequence is that of Calcium-activated potassium channel subunit alpha-1 (Kcnma1) from Rattus norvegicus (Rat).